A 242-amino-acid chain; its full sequence is Large ribosomal subunit protein uL1 (242 aa).

Belongs to the universal ribosomal protein uL1 family. In terms of assembly, part of the 50S ribosomal subunit.

Functionally, binds directly to 23S rRNA. The L1 stalk is quite mobile in the ribosome, and is involved in E site tRNA release. Its function is as follows. Protein L1 is also a translational repressor protein, it controls the translation of the L11 operon by binding to its mRNA. The protein is Large ribosomal subunit protein uL1 of Sulfurihydrogenibium sp. (strain YO3AOP1).